A 233-amino-acid polypeptide reads, in one-letter code: Large ribosomal subunit protein uL1 (233 aa).

It belongs to the universal ribosomal protein uL1 family. As to quaternary structure, part of the 50S ribosomal subunit.

Binds directly to 23S rRNA. The L1 stalk is quite mobile in the ribosome, and is involved in E site tRNA release. In terms of biological role, protein L1 is also a translational repressor protein, it controls the translation of the L11 operon by binding to its mRNA. In Syntrophomonas wolfei subsp. wolfei (strain DSM 2245B / Goettingen), this protein is Large ribosomal subunit protein uL1.